Reading from the N-terminus, the 406-residue chain is Putative ankyrin repeat protein RF_0266 (406 aa).

5 ANK repeats span residues 68–98 (TSHS…DINN), 103–129 (NYIT…QDDI), 130–161 (KVQN…IIKP), 163–189 (HIEL…DIEK), and 203–232 (SIDC…KPEQ).

This is Putative ankyrin repeat protein RF_0266 from Rickettsia felis (strain ATCC VR-1525 / URRWXCal2) (Rickettsia azadi).